A 389-amino-acid chain; its full sequence is 26S proteasome regulatory subunit 10B (389 aa).

K72 is subject to N6-acetyllysine. 174–181 serves as a coordination point for ATP; the sequence is GPPGTGKT. K206 carries the N6-acetyllysine modification. A Phosphoserine modification is found at S244.

It belongs to the AAA ATPase family. In terms of assembly, component of the 19S proteasome regulatory particle complex. The 26S proteasome consists of a 20S core particle (CP) and two 19S regulatory subunits (RP). The regulatory particle is made of a lid composed of 9 subunits, a base containing 6 ATPases including PSMC6 and few additional components. Interacts with PAAF1.

The protein resides in the cytoplasm. Its subcellular location is the nucleus. In terms of biological role, component of the 26S proteasome, a multiprotein complex involved in the ATP-dependent degradation of ubiquitinated proteins. This complex plays a key role in the maintenance of protein homeostasis by removing misfolded or damaged proteins, which could impair cellular functions, and by removing proteins whose functions are no longer required. Therefore, the proteasome participates in numerous cellular processes, including cell cycle progression, apoptosis, or DNA damage repair. PSMC6 belongs to the heterohexameric ring of AAA (ATPases associated with diverse cellular activities) proteins that unfolds ubiquitinated target proteins that are concurrently translocated into a proteolytic chamber and degraded into peptides. The chain is 26S proteasome regulatory subunit 10B (PSMC6) from Homo sapiens (Human).